Here is a 352-residue protein sequence, read N- to C-terminus: Holliday junction branch migration complex subunit RuvB (352 aa).

The disordered stretch occupies residues 1–42 (MAIVSSSAGRADSQPPAAKSRVVDASPLPEEASPAREDGLRP). The interval 13-201 (SQPPAAKSRV…FGLIQRLEFY (189 aa)) is large ATPase domain (RuvB-L). Positions 33–42 (SPAREDGLRP) are enriched in basic and acidic residues. Positions 40, 41, 82, 85, 86, 87, 191, 201, and 238 each coordinate ATP. Position 86 (Thr-86) interacts with Mg(2+). The interval 202–273 (GLEDLQAIVE…LVDEALTLHR (72 aa)) is small ATPAse domain (RuvB-S). Residues 276 to 352 (ARGLDASDRR…RRHLGWPELP (77 aa)) form a head domain (RuvB-H) region. Arg-331 and Arg-336 together coordinate DNA.

The protein belongs to the RuvB family. In terms of assembly, homohexamer. Forms an RuvA(8)-RuvB(12)-Holliday junction (HJ) complex. HJ DNA is sandwiched between 2 RuvA tetramers; dsDNA enters through RuvA and exits via RuvB. An RuvB hexamer assembles on each DNA strand where it exits the tetramer. Each RuvB hexamer is contacted by two RuvA subunits (via domain III) on 2 adjacent RuvB subunits; this complex drives branch migration. In the full resolvosome a probable DNA-RuvA(4)-RuvB(12)-RuvC(2) complex forms which resolves the HJ.

Its subcellular location is the cytoplasm. The enzyme catalyses ATP + H2O = ADP + phosphate + H(+). Its function is as follows. The RuvA-RuvB-RuvC complex processes Holliday junction (HJ) DNA during genetic recombination and DNA repair, while the RuvA-RuvB complex plays an important role in the rescue of blocked DNA replication forks via replication fork reversal (RFR). RuvA specifically binds to HJ cruciform DNA, conferring on it an open structure. The RuvB hexamer acts as an ATP-dependent pump, pulling dsDNA into and through the RuvAB complex. RuvB forms 2 homohexamers on either side of HJ DNA bound by 1 or 2 RuvA tetramers; 4 subunits per hexamer contact DNA at a time. Coordinated motions by a converter formed by DNA-disengaged RuvB subunits stimulates ATP hydrolysis and nucleotide exchange. Immobilization of the converter enables RuvB to convert the ATP-contained energy into a lever motion, pulling 2 nucleotides of DNA out of the RuvA tetramer per ATP hydrolyzed, thus driving DNA branch migration. The RuvB motors rotate together with the DNA substrate, which together with the progressing nucleotide cycle form the mechanistic basis for DNA recombination by continuous HJ branch migration. Branch migration allows RuvC to scan DNA until it finds its consensus sequence, where it cleaves and resolves cruciform DNA. The sequence is that of Holliday junction branch migration complex subunit RuvB from Prochlorococcus marinus (strain MIT 9303).